We begin with the raw amino-acid sequence, 403 residues long: S-adenosylmethionine synthase (403 aa).

Residue His-22 coordinates ATP. A Mg(2+)-binding site is contributed by Asp-24. Glu-50 is a binding site for K(+). Positions 63 and 107 each coordinate L-methionine. A flexible loop region spans residues 107–117 (QSPDIAMGVDK). ATP contacts are provided by residues 182–184 (DAK), 248–249 (RF), Asp-257, 263–264 (RK), Ala-280, and Lys-284. Residue Asp-257 coordinates L-methionine. Lys-288 contributes to the L-methionine binding site.

It belongs to the AdoMet synthase family. As to quaternary structure, homotetramer; dimer of dimers. It depends on Mg(2+) as a cofactor. The cofactor is K(+).

It localises to the cytoplasm. It carries out the reaction L-methionine + ATP + H2O = S-adenosyl-L-methionine + phosphate + diphosphate. It participates in amino-acid biosynthesis; S-adenosyl-L-methionine biosynthesis; S-adenosyl-L-methionine from L-methionine: step 1/1. Functionally, catalyzes the formation of S-adenosylmethionine (AdoMet) from methionine and ATP. The overall synthetic reaction is composed of two sequential steps, AdoMet formation and the subsequent tripolyphosphate hydrolysis which occurs prior to release of AdoMet from the enzyme. The chain is S-adenosylmethionine synthase from Chloroflexus aurantiacus (strain ATCC 29366 / DSM 635 / J-10-fl).